A 313-amino-acid polypeptide reads, in one-letter code: Porphobilinogen deaminase (313 aa).

An S-(dipyrrolylmethanemethyl)cysteine modification is found at Cys241.

This sequence belongs to the HMBS family. Monomer. Requires dipyrromethane as cofactor.

The catalysed reaction is 4 porphobilinogen + H2O = hydroxymethylbilane + 4 NH4(+). It functions in the pathway porphyrin-containing compound metabolism; protoporphyrin-IX biosynthesis; coproporphyrinogen-III from 5-aminolevulinate: step 2/4. It participates in porphyrin-containing compound metabolism; chlorophyll biosynthesis. Functionally, tetrapolymerization of the monopyrrole PBG into the hydroxymethylbilane pre-uroporphyrinogen in several discrete steps. The sequence is that of Porphobilinogen deaminase from Chlorobium phaeobacteroides (strain DSM 266 / SMG 266 / 2430).